The following is a 600-amino-acid chain: Alanine--tRNA ligase (600 aa).

Zn(2+)-binding residues include His463, His467, Cys565, and His569.

This sequence belongs to the class-II aminoacyl-tRNA synthetase family. Zn(2+) serves as cofactor.

Its subcellular location is the cytoplasm. It carries out the reaction tRNA(Ala) + L-alanine + ATP = L-alanyl-tRNA(Ala) + AMP + diphosphate. In terms of biological role, catalyzes the attachment of alanine to tRNA(Ala) in a two-step reaction: alanine is first activated by ATP to form Ala-AMP and then transferred to the acceptor end of tRNA(Ala). Also edits incorrectly charged Ser-tRNA(Ala) and Gly-tRNA(Ala) via its editing domain. The chain is Alanine--tRNA ligase (alaS) from Treponema denticola (strain ATCC 35405 / DSM 14222 / CIP 103919 / JCM 8153 / KCTC 15104).